The sequence spans 507 residues: O-fucosyltransferase 30 (507 aa).

A helical; Signal-anchor for type II membrane protein membrane pass occupies residues 26–46 (AIFLCSVSILVVFFIVVFFIT). Residues asparagine 110, asparagine 146, asparagine 398, and asparagine 410 are each glycosylated (N-linked (GlcNAc...) asparagine).

The protein belongs to the glycosyltransferase GT106 family.

It is found in the membrane. It participates in glycan metabolism. The sequence is that of O-fucosyltransferase 30 from Arabidopsis thaliana (Mouse-ear cress).